Here is a 90-residue protein sequence, read N- to C-terminus: uncharacterized protein (90 aa).

This is an uncharacterized protein from Bacillus subtilis (strain 168).